A 398-amino-acid polypeptide reads, in one-letter code: Stimulator of interferon genes protein (398 aa).

At 1–16 (MSVMGEDALVPRARSR) the chain is on the cytoplasmic side. Residues 17-37 (LPVMCAAGLGFLTLAVAWLLD) traverse the membrane as a helical segment. At 38-44 (SDKFSER) the chain is on the lumenal side. A helical transmembrane segment spans residues 45–65 (AGIIAFGLMLERFIYCICLLA). The Cytoplasmic portion of the chain corresponds to 66-91 (EELLFHSRQRYHGRMSEIFRACFRGS). A helical membrane pass occupies residues 92–112 (GILGMCAIFLMLMLGGVSFSV). Over 113–120 (KQWSHFNL) the chain is Lumenal. A helical transmembrane segment spans residues 121–141 (MCAGYMLLNSLGVLGPAPVEI). Over 142–398 (SEICEAKKMN…FNPSSAMKQN (257 aa)) the chain is Cytoplasmic. Residues 150–331 (MNVAHGLAWS…QNLKQQDGEI (182 aa)) are cyclic dinucleotide-binding domain (CBD). Residues Ser-159, Tyr-164, Arg-230, and Thr-254 each contribute to the 2',3'-cGAMP site. 3',3'-c-di-GMP contacts are provided by residues Ser-159, Tyr-164, 230 to 233 (RSYT), and Thr-254. Residues 375–398 (PQSLRSEPVETTDYFNPSSAMKQN) are disordered. Residues 387-398 (DYFNPSSAMKQN) show a composition bias toward polar residues.

This sequence belongs to the STING family. In terms of assembly, homodimer; forms a homodimer in absence of cyclic nucleotide (c-di-GMP or cGAMP). Homotetramer; in presence of cyclic nucleotide (c-di-GMP or cGAMP), forms tetramers and higher-order oligomers through side-by-side packing. Interacts (when phosphorylated) with irf3; following activation and phosphorylation by tbk1, recruits irf3. Phosphorylation by TBK1 leads to activation and production of IFN-beta. Following cyclic nucleotide (c-di-GMP or cGAMP)-binding, activation and translocation from the endoplasmic reticulum, STING1 is phosphorylated by tbk1, leading to recruitment of the transcription factor irf3 to induce type-I interferons and other cytokines.

Its subcellular location is the endoplasmic reticulum membrane. It localises to the cytoplasm. It is found in the perinuclear region. The protein resides in the endoplasmic reticulum-Golgi intermediate compartment membrane. The protein localises to the golgi apparatus membrane. Its subcellular location is the cytoplasmic vesicle. It localises to the autophagosome membrane. It catalyses the reaction H(+)(in) = H(+)(out). Facilitator of innate immune signaling that acts as a sensor of cytosolic DNA from bacteria and viruses and promotes the production of type I interferon (IFN-alpha and IFN-beta). Innate immune response is triggered in response to non-CpG double-stranded DNA from viruses and bacteria delivered to the cytoplasm. Acts by binding cyclic dinucleotides: recognizes and binds cyclic di-GMP (c-di-GMP), a second messenger produced by bacteria, and cyclic GMP-AMP (cGAMP), a messenger produced by CGAS in response to DNA virus in the cytosol. Upon binding of c-di-GMP or cGAMP, STING1 oligomerizes and is able to activate both NF-kappa-B and irf3 transcription pathways to induce expression of type I interferon and exert a potent anti-viral state. Exhibits 2',3' phosphodiester linkage-specific ligand recognition: can bind both 2'-3' linked cGAMP and 3'-3' linked cGAMP but is preferentially activated by 2'-3' linked cGAMP. In addition to promote the production of type I interferons, plays a direct role in autophagy. Following cGAMP-binding, STING1 buds from the endoplasmic reticulum into COPII vesicles, which then form the endoplasmic reticulum-Golgi intermediate compartment (ERGIC). The ERGIC serves as the membrane source for LC3 lipidation, leading to formation of autophagosomes that target cytosolic DNA or DNA viruses for degradation by the lysosome. Promotes autophagy by acting as a proton channel that directs proton efflux from the Golgi to facilitate LC3 lipidation. The autophagy- and interferon-inducing activities can be uncoupled and autophagy induction is independent of TBK1 phosphorylation. In Danio rerio (Zebrafish), this protein is Stimulator of interferon genes protein.